The chain runs to 139 residues: Peptide methionine sulfoxide reductase MsrB (139 aa).

The region spanning 9-131 (TPSDNTEMTE…NSASLSFIDD (123 aa)) is the MsrB domain. Cysteine 48, cysteine 51, cysteine 97, and cysteine 100 together coordinate Zn(2+). Cysteine 120 (nucleophile) is an active-site residue.

The protein belongs to the MsrB Met sulfoxide reductase family. Requires Zn(2+) as cofactor.

The enzyme catalyses L-methionyl-[protein] + [thioredoxin]-disulfide + H2O = L-methionyl-(R)-S-oxide-[protein] + [thioredoxin]-dithiol. The protein is Peptide methionine sulfoxide reductase MsrB of Pectobacterium atrosepticum (strain SCRI 1043 / ATCC BAA-672) (Erwinia carotovora subsp. atroseptica).